The sequence spans 338 residues: DNA-directed RNA polymerase subunit alpha (338 aa).

Residues 1–234 (MIHKNWAELI…DQLGIFVNFE (234 aa)) form an alpha N-terminal domain (alpha-NTD) region. Residues 250-338 (FNPLLLKKVD…DLAKKFEDSF (89 aa)) form an alpha C-terminal domain (alpha-CTD) region.

The protein belongs to the RNA polymerase alpha chain family. Homodimer. The RNAP catalytic core consists of 2 alpha, 1 beta, 1 beta' and 1 omega subunit. When a sigma factor is associated with the core the holoenzyme is formed, which can initiate transcription.

It carries out the reaction RNA(n) + a ribonucleoside 5'-triphosphate = RNA(n+1) + diphosphate. Functionally, DNA-dependent RNA polymerase catalyzes the transcription of DNA into RNA using the four ribonucleoside triphosphates as substrates. This Roseobacter denitrificans (strain ATCC 33942 / OCh 114) (Erythrobacter sp. (strain OCh 114)) protein is DNA-directed RNA polymerase subunit alpha.